The sequence spans 284 residues: MRLIIVSGRSGSGKSTALDVLEDSGFYCIDNLPAGVLPQLAENALINTELLQPKVAVSIDARNLPSHLMRFPELLEEARARHIQCDVLYLDADEEVLLKRFSETRRRHPLTNANRSLAEAIRVESDLLGPIADLADLKIDTTNLNLYQLRDSIKLRLLNQPEPGTAFLVESFGFKRGMPVDADLVFDVRCLPNPYWKPELREHSGLDQPVIDYLAAQPDVEDMYNDISSYLLKWLPRFAASNRAYVTIAIGCTGGHHRSVYITERLGRQLQQTLKNVQVRHRDL.

An ATP-binding site is contributed by 8–15 (GRSGSGKS). 60–63 (DARN) provides a ligand contact to GTP.

It belongs to the RapZ-like family.

In terms of biological role, displays ATPase and GTPase activities. The protein is Nucleotide-binding protein in ptsO 5'region of Pseudomonas putida (Arthrobacter siderocapsulatus).